Consider the following 353-residue polypeptide: Ion-translocating oxidoreductase complex subunit D (353 aa).

A run of 4 helical transmembrane segments spans residues 20 to 40, 44 to 64, 77 to 108, and 123 to 143; these read IMLL…YYFG, IIQV…ILHL, SALL…AIII, and PAMV…TSWL. Threonine 187 bears the FMN phosphoryl threonine mark. 4 consecutive transmembrane segments (helical) span residues 214 to 234, 242 to 262, 267 to 287, and 301 to 318; these read VIAG…GVFL, WHIP…GWLL, LVTP…FFIA, and LLYG…RSYG.

The protein belongs to the NqrB/RnfD family. As to quaternary structure, the complex is composed of six subunits: RnfA, RnfB, RnfC, RnfD, RnfE and RnfG. FMN serves as cofactor.

It localises to the cell inner membrane. In terms of biological role, part of a membrane-bound complex that couples electron transfer with translocation of ions across the membrane. This is Ion-translocating oxidoreductase complex subunit D from Erwinia tasmaniensis (strain DSM 17950 / CFBP 7177 / CIP 109463 / NCPPB 4357 / Et1/99).